A 1798-amino-acid chain; its full sequence is U3 small nucleolar RNA-associated protein 10 (1798 aa).

One copy of the HEAT 1 repeat lies at 583-620 (LDFQALLPFLLVTLTDPSERVRREAAAALAAVGSLYKK). The next 2 membrane-spanning stretches (helical) occupy residues 942–962 (IQSG…AIVN) and 998–1018 (ALLL…HSVM). 4 HEAT repeats span residues 1042 to 1079 (QTID…AFEH), 1249 to 1286 (LTLV…QNPE), 1293 to 1331 (IRVL…KYGK), and 1754 to 1791 (ALLP…VLGE).

The protein belongs to the HEATR1/UTP10 family. As to quaternary structure, component of the ribosomal small subunit (SSU) processome.

It localises to the nucleus. The protein resides in the nucleolus. Its subcellular location is the membrane. In terms of biological role, involved in nucleolar processing of pre-18S ribosomal RNA. Involved in ribosome biosynthesis. This Aspergillus fumigatus (strain ATCC MYA-4609 / CBS 101355 / FGSC A1100 / Af293) (Neosartorya fumigata) protein is U3 small nucleolar RNA-associated protein 10.